A 147-amino-acid polypeptide reads, in one-letter code: Large ribosomal subunit protein uL11 (147 aa).

Belongs to the universal ribosomal protein uL11 family. As to quaternary structure, part of the ribosomal stalk of the 50S ribosomal subunit. Interacts with L10 and the large rRNA to form the base of the stalk. L10 forms an elongated spine to which L12 dimers bind in a sequential fashion forming a multimeric L10(L12)X complex. One or more lysine residues are methylated.

Forms part of the ribosomal stalk which helps the ribosome interact with GTP-bound translation factors. The protein is Large ribosomal subunit protein uL11 of Bacteroides thetaiotaomicron (strain ATCC 29148 / DSM 2079 / JCM 5827 / CCUG 10774 / NCTC 10582 / VPI-5482 / E50).